A 318-amino-acid polypeptide reads, in one-letter code: Ubiquitin-like domain-containing CTD phosphatase 1 (318 aa).

The 79-residue stretch at 3-81 (VSVIIKWGGQ…IMMMGTREES (79 aa)) folds into the Ubiquitin-like domain. The FCP1 homology domain maps to 133–294 (PRPGKRLLVL…YKLSQYLKEI (162 aa)). Residues Asp143, Asp145, and Asp253 each contribute to the Mg(2+) site.

Mg(2+) is required as a cofactor.

The protein resides in the nucleus. The catalysed reaction is O-phospho-L-seryl-[protein] + H2O = L-seryl-[protein] + phosphate. It carries out the reaction O-phospho-L-threonyl-[protein] + H2O = L-threonyl-[protein] + phosphate. In terms of biological role, dephosphorylates 26S nuclear proteasomes, thereby decreasing their proteolytic activity. Recruited to the 19S regulatory particle of the 26S proteasome where it dephosphorylates 19S component psmc2 which impairs psmc2 ATPase activity and disrupts 26S proteasome assembly. Has also been reported to stimulate the proteolytic activity of the 26S proteasome. The sequence is that of Ubiquitin-like domain-containing CTD phosphatase 1 (ublcp1) from Danio rerio (Zebrafish).